Here is a 121-residue protein sequence, read N- to C-terminus: Basic phospholipase A2 homolog piratoxin-1 (121 aa).

Disulfide bonds link Cys26–Cys115, Cys28–Cys44, Cys43–Cys95, Cys49–Cys121, Cys50–Cys88, Cys57–Cys81, and Cys75–Cys86. Residues 105-117 are important for membrane-damaging activities in eukaryotes and bacteria; heparin-binding; sequence KLYRYHLKPFCKK.

It belongs to the phospholipase A2 family. Group II subfamily. K49 sub-subfamily. In terms of assembly, homodimer; non-covalently linked. In terms of tissue distribution, expressed by the venom gland.

Its subcellular location is the secreted. Rosmarinic acid inhibits the myotoxic activity. Bromophenacyl bromide (BPB) inhibits the myotoxic activity through a covalent binding. Caffeic acid and aristolochic acid, two plant compounds used in folk medicine used to treat envenomation, inhibit the myotoxic activity. Snake venom phospholipase A2 (PLA2) homolog that lacks enzymatic activity. Is myotoxic and displays edema-inducing activities. Induces neuromuscular blockage. A model of myotoxic mechanism has been proposed: an apo Lys49-PLA2 is activated by the entrance of a hydrophobic molecule (e.g. fatty acid) at the hydrophobic channel of the protein leading to a reorientation of a monomer. This reorientation causes a transition between 'inactive' to 'active' states, causing alignment of C-terminal and membrane-docking sites (MDoS) side-by-side and putting the membrane-disruption sites (MDiS) in the same plane, exposed to solvent and in a symmetric position for both monomers. The MDoS region stabilizes the toxin on membrane by the interaction of charged residues with phospholipid head groups. Subsequently, the MDiS region destabilizes the membrane with penetration of hydrophobic residues. This insertion causes a disorganization of the membrane, allowing an uncontrolled influx of ions (i.e. calcium and sodium), and eventually triggering irreversible intracellular alterations and cell death. This is Basic phospholipase A2 homolog piratoxin-1 from Bothrops pirajai (Piraja's lancehead).